Consider the following 362-residue polypeptide: MGNIFGHLFRISTFGESHGGGVGVVIDGCPPQLEISAEEIQVELDRRRPGQSKITTPRKEADTCEIISGVFEGKTLGTPITILVRNQDTRPQDYDEMAQKYRPSHADATYDAKYGIRNWQGGGRSSARETIGRVAAGAIAKKILRQVANVEIIAYVKRIKDLEGVVDPNTVTLEQVESNIVRCPDAECGDRMIELIEQIGRQGDSIGGVVECVARNVPKGLGEPVFDKLEADIAKGVMSLPASKGFEIGSGFAGTLLTGIEHNDEFYIDQNDEIRTVTNRSGGIQGGISNGENIILRVAFKPTATIRKEQKTVTREGEETLLAAKGRHDPCVLPRAVPMVEAMVALVLCDHLLRHHGQCKVL.

NADP(+) is bound at residue arginine 47. FMN contacts are provided by residues 124–126 (RSS), glycine 286, 301–305 (KPTAT), and arginine 327.

This sequence belongs to the chorismate synthase family. Homotetramer. It depends on FMNH2 as a cofactor.

The catalysed reaction is 5-O-(1-carboxyvinyl)-3-phosphoshikimate = chorismate + phosphate. It functions in the pathway metabolic intermediate biosynthesis; chorismate biosynthesis; chorismate from D-erythrose 4-phosphate and phosphoenolpyruvate: step 7/7. Its function is as follows. Catalyzes the anti-1,4-elimination of the C-3 phosphate and the C-6 proR hydrogen from 5-enolpyruvylshikimate-3-phosphate (EPSP) to yield chorismate, which is the branch point compound that serves as the starting substrate for the three terminal pathways of aromatic amino acid biosynthesis. This reaction introduces a second double bond into the aromatic ring system. The polypeptide is Chorismate synthase (Nostoc punctiforme (strain ATCC 29133 / PCC 73102)).